Reading from the N-terminus, the 260-residue chain is MFRNQYDGDVTVWSPQGRLHQVEYAVEAMKQGSATVGIKSETHAVIVALKRAQNDLSSHQKKVYEIDTHAGVSIAGLLSDGRILARYLQTECSSWRWDYKQAVPIKKLAESMQLKLQANTQYYGRRPFGVGILIAGYDKDGAHIIQTDPSAEVVSMHGTSIGARSQSARTYLERNVDNFEKSTPEQLIVHALLALRDTLPAEENLNAQNTSIGIVGKDSPFSLLEDAQVAVHLNQVSTHPRTTGGAAAAAAPGGAEPMQM.

The interval 240-260 is disordered; sequence PRTTGGAAAAAAPGGAEPMQM. The segment covering 244-260 has biased composition (low complexity); it reads GGAAAAAAPGGAEPMQM.

It belongs to the peptidase T1A family. The 26S proteasome consists of a 20S proteasome core and two 19S regulatory subunits. The 20S proteasome core is composed of 28 subunits that are arranged in four stacked rings, resulting in a barrel-shaped structure. The two end rings are each formed by seven alpha subunits, and the two central rings are each formed by seven beta subunits. The catalytic chamber with the active sites is on the inside of the barrel.

Its subcellular location is the cytoplasm. The protein localises to the nucleus. Functionally, the proteasome is a multicatalytic proteinase complex which is characterized by its ability to cleave peptides with Arg, Phe, Tyr, Leu, and Glu adjacent to the leaving group at neutral or slightly basic pH. The proteasome has an ATP-dependent proteolytic activity. The polypeptide is Proteasome subunit alpha type-1 (pas-6) (Caenorhabditis elegans).